The chain runs to 464 residues: GDNF family receptor alpha-2 (464 aa).

An N-terminal signal peptide occupies residues 1-21; that stretch reads MILANAFCLFFFLDETLRSLA. 14 disulfides stabilise this stretch: Cys-40/Cys-93, Cys-47/Cys-53, Cys-63/Cys-78, Cys-95/Cys-105, Cys-161/Cys-222, Cys-168/Cys-174, Cys-185/Cys-200, Cys-195/Cys-241, Cys-224/Cys-229, Cys-251/Cys-323, Cys-258/Cys-264, Cys-275/Cys-293, Cys-285/Cys-347, and Cys-325/Cys-335. Asn-52 carries an N-linked (GlcNAc...) asparagine glycan. N-linked (GlcNAc...) asparagine glycosylation is present at Asn-357. Polar residues predominate over residues 360 to 374; the sequence is DVNLSPKSPPFQATQ. The interval 360 to 392 is disordered; it reads DVNLSPKSPPFQATQAPRVDKTPSLPDDLSDST. Positions 381–392 are enriched in low complexity; it reads TPSLPDDLSDST. An N-linked (GlcNAc...) asparagine glycan is attached at Asn-413. Residue Asn-440 is the site of GPI-anchor amidated asparagine attachment. Residues 441–464 constitute a propeptide, removed in mature form; that stretch reads SGPRRTRPSAALTAASFLMLKLAL.

This sequence belongs to the GDNFR family. As to quaternary structure, interacts with NRTN ligand and RET: forms a 2:2:2 ternary complex composed of NRTN ligand, GFRA2 and RET receptor. Also forms a 4:4:4 tetrameric complex composed of 4 copies of NRTN ligand, GFRA2 and RET receptor, which prevents endocytosis of RET. Interacts with SORL1.

The protein localises to the cell membrane. Receptor for neurturin (NRTN), a growth factor that supports the survival of sympathetic neurons. NRTN-binding leads to autophosphorylation and activation of the RET receptor. Also able to mediate GDNF signaling through the RET tyrosine kinase receptor. In Bos taurus (Bovine), this protein is GDNF family receptor alpha-2 (GFRA2).